A 334-amino-acid polypeptide reads, in one-letter code: Trans-1,2-dihydrobenzene-1,2-diol dehydrogenase (334 aa).

Belongs to the Gfo/Idh/MocA family. Homodimer. In terms of tissue distribution, small intestine.

The enzyme catalyses (1R,2R)-1,2-dihydrobenzene-1,2-diol + NADP(+) = catechol + NADPH + H(+). The catalysed reaction is D-xylose + NADP(+) = D-xylono-1,5-lactone + NADPH + H(+). In Homo sapiens (Human), this protein is Trans-1,2-dihydrobenzene-1,2-diol dehydrogenase (DHDH).